The sequence spans 632 residues: Golgin subfamily A member 8H (632 aa).

A disordered region spans residues 1-77; that stretch reads MAEETQHNKL…SSATLKDLES (77 aa). Coiled coils occupy residues 110–201 and 240–468; these read VEHQ…LSSR and ECAE…EKAD. Basic and acidic residues-rich tracts occupy residues 352–362 and 427–440; these read KQEERIQEQHK and HGGE…EEAP. 3 disordered regions span residues 352–379, 423–452, and 496–524; these read KQEE…EPNN, PGEG…DPES, and LSEP…DEGE. Residues 508-520 show a composition bias toward gly residues; it reads LGGGHHQAGAQGG.

This sequence belongs to the GOLGA8 family.

This chain is Golgin subfamily A member 8H (GOLGA8H), found in Homo sapiens (Human).